A 154-amino-acid polypeptide reads, in one-letter code: Superoxide dismutase [Cu-Zn] (154 aa).

Residues histidine 47, histidine 49, and histidine 64 each coordinate Cu cation. Cysteine 58 and cysteine 147 form a disulfide bridge. Residues histidine 64, histidine 72, histidine 81, and aspartate 84 each contribute to the Zn(2+) site. Position 121 (histidine 121) interacts with Cu cation. Residue arginine 144 coordinates substrate.

Belongs to the Cu-Zn superoxide dismutase family. Homodimer. The cofactor is Cu cation. It depends on Zn(2+) as a cofactor.

It localises to the cytoplasm. It carries out the reaction 2 superoxide + 2 H(+) = H2O2 + O2. Its function is as follows. Destroys radicals which are normally produced within the cells and which are toxic to biological systems. The sequence is that of Superoxide dismutase [Cu-Zn] (SOD1) from Claviceps purpurea (strain 20.1) (Ergot fungus).